The sequence spans 655 residues: Protein nipi-3 (655 aa).

Positions 1-35 (MARTKCKTKTVANPRTGVRKTAKDLSEPVRQDAVS) are disordered. Over residues 21–35 (TAKDLSEPVRQDAVS) the composition is skewed to basic and acidic residues. One can recognise a Protein kinase domain in the interval 200–470 (IGIFVIYGTG…NQVNGDFPEI (271 aa)). ATP is bound by residues 206–214 (YGTGLVTRA) and K235.

Belongs to the protein kinase superfamily. CAMK Ser/Thr protein kinase family. In terms of assembly, may interact with transcription factor cebp-1 (via N-terminus). As to expression, expressed in epidermis, pharynx, intestine, a subset of head neurons and motoneurons.

The protein localises to the nucleus. Adapter protein that regulates different signaling pathways. Required for larval development and viability. Involved in negatively modulating pmk-1 p38/MAPK signaling. Involved in innate immunity, acting either in a manner dependent upon, or independent of, the pmk-1 or pmk-3 p38/MAPK pathways. Has a protective role in response to infection by the Gram-negative bacterium P.aeruginosa, acting by negatively modulating expression of cebp-1, and regulating the pmk-1 p38/MAPK pathway, leading to activation of transcription factor skn-1. Required to prevent P.aeruginosa toxin ToxA-mediated lethality, probably acting via modulating the effects of translational inhibition caused by the toxin. By regulating the up-regulation in the epidermis of antimicrobial peptides nlp-29 and nlp-31, plays a role in resistance to fungal infection. This is Protein nipi-3 from Caenorhabditis elegans.